Here is a 335-residue protein sequence, read N- to C-terminus: Adenosine deaminase (335 aa).

2 residues coordinate Zn(2+): histidine 12 and histidine 14. The substrate site is built by histidine 14 and aspartate 16. Histidine 197 lines the Zn(2+) pocket. The active-site Proton donor is the glutamate 200. A Zn(2+)-binding site is contributed by aspartate 278.

Belongs to the metallo-dependent hydrolases superfamily. Adenosine and AMP deaminases family. Adenosine deaminase subfamily. The cofactor is Zn(2+).

It carries out the reaction adenosine + H2O + H(+) = inosine + NH4(+). It catalyses the reaction 2'-deoxyadenosine + H2O + H(+) = 2'-deoxyinosine + NH4(+). In terms of biological role, catalyzes the hydrolytic deamination of adenosine and 2-deoxyadenosine. The polypeptide is Adenosine deaminase (Clostridium botulinum (strain ATCC 19397 / Type A)).